The sequence spans 229 residues: MAKLTKRMKAIKAGVDSTKAYEINEAIAVLKQFATAKFDESVDVAVNLGIDPRKSDQNVRGATVLPNGTGRSVRVAVFTQGANADAAKEAGADLVGMEDLAEQIKKGEMNFDVVIASPDAMRVVGQLGQVLGPRGLMPNPKVGTVTPNVADAVKNAKSGQVRYRNDKNGIIHTTIGKASFSAEALTQNLQALLAALVKAKPTTAKGIFIKKVSISTTMGAGVAVDQNSL.

It belongs to the universal ribosomal protein uL1 family. As to quaternary structure, part of the 50S ribosomal subunit.

Binds directly to 23S rRNA. The L1 stalk is quite mobile in the ribosome, and is involved in E site tRNA release. Its function is as follows. Protein L1 is also a translational repressor protein, it controls the translation of the L11 operon by binding to its mRNA. The protein is Large ribosomal subunit protein uL1 of Mannheimia succiniciproducens (strain KCTC 0769BP / MBEL55E).